Consider the following 179-residue polypeptide: Acireductone dioxygenase (179 aa).

4 residues coordinate Fe(2+): His88, His90, Glu94, and His133. Ni(2+) contacts are provided by His88, His90, Glu94, and His133.

The protein belongs to the acireductone dioxygenase (ARD) family. As to quaternary structure, monomer. Interacts with MMP14. Fe(2+) is required as a cofactor. It depends on Ni(2+) as a cofactor.

The protein resides in the cytoplasm. It is found in the nucleus. It localises to the cell membrane. It carries out the reaction 1,2-dihydroxy-5-(methylsulfanyl)pent-1-en-3-one + O2 = 4-methylsulfanyl-2-oxobutanoate + formate + 2 H(+). It catalyses the reaction 1,2-dihydroxy-5-(methylsulfanyl)pent-1-en-3-one + O2 = 3-(methylsulfanyl)propanoate + CO + formate + 2 H(+). It participates in amino-acid biosynthesis; L-methionine biosynthesis via salvage pathway; L-methionine from S-methyl-5-thio-alpha-D-ribose 1-phosphate: step 5/6. Its function is as follows. Catalyzes 2 different reactions between oxygen and the acireductone 1,2-dihydroxy-3-keto-5-methylthiopentene (DHK-MTPene) depending upon the metal bound in the active site. Fe-containing acireductone dioxygenase (Fe-ARD) produces formate and 2-keto-4-methylthiobutyrate (KMTB), the alpha-ketoacid precursor of methionine in the methionine recycle pathway. Ni-containing acireductone dioxygenase (Ni-ARD) produces methylthiopropionate, carbon monoxide and formate, and does not lie on the methionine recycle pathway. Also down-regulates cell migration mediated by MMP14. The sequence is that of Acireductone dioxygenase from Macaca mulatta (Rhesus macaque).